Here is an 843-residue protein sequence, read N- to C-terminus: MKVISLFILVGFIGESQIFSSASSPVNCQWDSYTPWSECNGCTKTQTRRRSVAVYGQYGGQPCVGNAFETQSCEPTRGCPTEEGCGERFRCFSGQCISKSLVCNGDSDCDEDSADEDRCEDSERRPSCDIDKPPPNIELTGNGYNELTGQFRNRVINTKSFGGQCRKVFSGDGKRFYRLSGNVLSYTFQVKINNDFNYEFYNSTWSYVKHTSTEHTSSSRKRSFFRSSSSSSRSYTTHTNEIHKGKSYQLLVVENTVEVTQFINNNPEFLQLAEPFWKELSHLPSLYDYSAYRRLIDQYGTHYLQSGSLGGEYRVLFYVDSEKLKQNGFTSVEEKKCKSSGWHFVVKFSSHGCKELENALKAASGTQNNVLRGNPFIRGGGAGFISSLSYLELDNPAGNKRRYSAWAKSVTDLPKVIKQKLTPLYELVKEVPCVSVKKLYLKRALEEYLDEFDPCHCRPCQNGGLATVEGTHCLCHCKPYTFGAACEQGVLVGNQAGGVDGGWSCWSSWSSCVQGKKTRSRECNNPPPSGGGRSCIGETTESTQCEDEELEHLRLLEPHCFPLSLVPTEFCPSPPALKDGFVQDEGTMFPVGKNVVYTCNEGYSLIGNPVARCGEDLQWLVGEMHCQKIACVLPVLMDGIQSHPQKPFYTVGEKVTVSCSGGMSLEGPSAFLCGSSLKWSPEMKNAHCVQKENPLTQAVPKCQRWEKLQNSRCVCKMPYECVPSLDVCARDERSKRILPLTVCKMHVLHCQGRNYTLTGRDSCTLPASAEKACGACPLWGKCDAESSKCVCREASECEEEGFSICVEVNGKEQTMSECEAGSLRCRGQSISVTSIRPCAAETQ.

The signal sequence occupies residues 1–22; the sequence is MKVISLFILVGFIGESQIFSSA. The region spanning 27–80 is the TSP type-1 1 domain; the sequence is NCQWDSYTPWSECNGCTKTQTRRRSVAVYGQYGGQPCVGNAFETQSCEPTRGCP. Intrachain disulfides connect cysteine 28–cysteine 63, cysteine 39–cysteine 73, cysteine 42–cysteine 79, cysteine 85–cysteine 96, cysteine 91–cysteine 109, cysteine 103–cysteine 119, and cysteine 128–cysteine 165. Residue tryptophan 36 is glycosylated (C-linked (Man) tryptophan). An LDL-receptor class A domain is found at 83-121; that stretch reads EGCGERFRCFSGQCISKSLVCNGDSDCDEDSADEDRCED. The tract at residues 106–143 is disordered; that stretch reads DSDCDEDSADEDRCEDSERRPSCDIDKPPPNIELTGNG. Residues 107–120 show a composition bias toward acidic residues; sequence SDCDEDSADEDRCE. Residues 121-132 show a composition bias toward basic and acidic residues; that stretch reads DSERRPSCDIDK. The MACPF domain maps to 124 to 456; sequence RRPSCDIDKP…EYLDEFDPCH (333 aa). Residue asparagine 202 is glycosylated (N-linked (GlcNAc...) asparagine). 12 cysteine pairs are disulfide-bonded: cysteine 337–cysteine 353, cysteine 433–cysteine 560, cysteine 455–cysteine 505, cysteine 457–cysteine 473, cysteine 460–cysteine 475, cysteine 477–cysteine 486, cysteine 512–cysteine 545, cysteine 523–cysteine 535, cysteine 571–cysteine 613, cysteine 599–cysteine 626, cysteine 631–cysteine 673, and cysteine 659–cysteine 688. One can recognise an EGF-like domain in the interval 457-487; it reads CRPCQNGGLATVEGTHCLCHCKPYTFGAACE. The TSP type-1 2 domain occupies 500-549; sequence DGGWSCWSSWSSCVQGKKTRSRECNNPPPSGGGRSCIGETTESTQCEDEE. Tryptophan 503, tryptophan 506, and tryptophan 509 each carry a C-linked (Man) tryptophan glycan. The interval 518 to 537 is disordered; it reads TRSRECNNPPPSGGGRSCIG. CCP regions lie at residues 545–615 and 616–693; these read CEDE…RCGE and DLQW…QKEN. Sushi domains are found at residues 569-628 and 629-690; these read EFCP…HCQK and IACV…HCVQ. Factor I module (FIM) stretches follow at residues 695 to 770 and 771 to 843; these read LTQA…ASAE and KACG…AETQ. Threonine 696 is a glycosylation site (O-linked (GalNAc...) threonine). 9 cysteine pairs are disulfide-bonded: cysteine 702–cysteine 713, cysteine 715–cysteine 750, cysteine 721–cysteine 743, cysteine 728–cysteine 763, cysteine 773–cysteine 782, cysteine 776–cysteine 789, cysteine 791–cysteine 825, cysteine 797–cysteine 818, and cysteine 805–cysteine 838. Asparagine 754 carries N-linked (GlcNAc...) asparagine glycosylation.

It belongs to the complement C6/C7/C8/C9 family. In terms of assembly, monomer or dimer; as a C5b-7 complex it can also form multimeric rosettes. Component of the membrane attack complex (MAC), composed of complement C5b, C6, C7, C8A, C8B, C8G and multiple copies of the pore-forming subunit C9. Post-translationally, C-, N- and O-glycosylated. O-glycosylated with core 1 or possibly core 8 glycans.

It localises to the secreted. The protein resides in the target cell membrane. With respect to regulation, membrane attack complex (MAC) assembly is inhibited by CD59, thereby protecting self-cells from damage during complement activation. MAC assembly is also inhibited by clusterin (CLU) chaperones that inhibit polymerization of C9. In terms of biological role, component of the membrane attack complex (MAC), a multiprotein complex activated by the complement cascade, which inserts into a target cell membrane and forms a pore, leading to target cell membrane rupture and cell lysis. The MAC is initiated by proteolytic cleavage of C5 into complement C5b in response to the classical, alternative, lectin and GZMK complement pathways. The complement pathways consist in a cascade of proteins that leads to phagocytosis and breakdown of pathogens and signaling that strengthens the adaptive immune system. C7 serves as a membrane anchor. During MAC assembly, associates with C5b and C6 to form the C5b-7 complex, a key lipophilic precursor of the MAC complex, which associates with the outer leaflet and reduces the energy for membrane bending. In Pongo abelii (Sumatran orangutan), this protein is Complement component C7 (C7).